A 652-amino-acid polypeptide reads, in one-letter code: Translation factor guf1, mitochondrial (652 aa).

Residues 1 to 44 constitute a mitochondrion transit peptide; sequence MSIFRLSRTFSLETCLKSSSFKIRWRFFSVSYASRKLASEDNKP. Positions 56 to 237 constitute a tr-type G domain; it reads NRVRNWAVIA…EIIQKIPPPK (182 aa). GTP-binding positions include 65-72, 130-134, and 184-187; these read AHIDHGKS, DTPGH, and NKVD.

Belongs to the TRAFAC class translation factor GTPase superfamily. Classic translation factor GTPase family. LepA subfamily.

The protein localises to the mitochondrion inner membrane. It catalyses the reaction GTP + H2O = GDP + phosphate + H(+). Functionally, promotes mitochondrial protein synthesis. May act as a fidelity factor of the translation reaction, by catalyzing a one-codon backward translocation of tRNAs on improperly translocated ribosomes. Binds to mitochondrial ribosomes in a GTP-dependent manner. The protein is Translation factor guf1, mitochondrial (guf1) of Schizosaccharomyces pombe (strain 972 / ATCC 24843) (Fission yeast).